A 396-amino-acid polypeptide reads, in one-letter code: Elongation factor Tu (396 aa).

Residues 10 to 205 (KPHVNIGTIG…ACDDNIPDPV (196 aa)) form the tr-type G domain. The tract at residues 19 to 26 (GHVDHGKT) is G1. Residue 19-26 (GHVDHGKT) coordinates GTP. Thr26 is a binding site for Mg(2+). Positions 62-66 (GITIN) are G2. The tract at residues 83–86 (DAPG) is G3. Residues 83-87 (DAPGH) and 138-141 (NKCD) each bind GTP. Residues 138-141 (NKCD) form a G4 region. The interval 175 to 177 (SAL) is G5.

This sequence belongs to the TRAFAC class translation factor GTPase superfamily. Classic translation factor GTPase family. EF-Tu/EF-1A subfamily. In terms of assembly, monomer.

The protein resides in the cytoplasm. It catalyses the reaction GTP + H2O = GDP + phosphate + H(+). Its function is as follows. GTP hydrolase that promotes the GTP-dependent binding of aminoacyl-tRNA to the A-site of ribosomes during protein biosynthesis. The protein is Elongation factor Tu of Corynebacterium glutamicum (strain R).